A 453-amino-acid chain; its full sequence is uncharacterized protein (453 aa).

This is an uncharacterized protein from Galliformes (FAdV-1).